A 486-amino-acid chain; its full sequence is Ribulose bisphosphate carboxylase large chain (486 aa).

Substrate contacts are provided by Asn-126 and Thr-176. The Proton acceptor role is filled by Lys-178. Lys-180 is a binding site for substrate. Lys-204, Asp-206, and Glu-207 together coordinate Mg(2+). The residue at position 204 (Lys-204) is an N6-carboxylysine. His-296 (proton acceptor) is an active-site residue. Substrate contacts are provided by Arg-297, His-329, and Ser-381.

Belongs to the RuBisCO large chain family. Type I subfamily. Heterohexadecamer of 8 large chains and 8 small chains. Mg(2+) is required as a cofactor.

It carries out the reaction 2 (2R)-3-phosphoglycerate + 2 H(+) = D-ribulose 1,5-bisphosphate + CO2 + H2O. The catalysed reaction is D-ribulose 1,5-bisphosphate + O2 = 2-phosphoglycolate + (2R)-3-phosphoglycerate + 2 H(+). Its function is as follows. RuBisCO catalyzes two reactions: the carboxylation of D-ribulose 1,5-bisphosphate, the primary event in carbon dioxide fixation, as well as the oxidative fragmentation of the pentose substrate. Both reactions occur simultaneously and in competition at the same active site. In Methylacidiphilum infernorum (isolate V4) (Methylokorus infernorum (strain V4)), this protein is Ribulose bisphosphate carboxylase large chain.